Consider the following 114-residue polypeptide: Large ribosomal subunit protein bL19 (114 aa).

This sequence belongs to the bacterial ribosomal protein bL19 family.

Its function is as follows. This protein is located at the 30S-50S ribosomal subunit interface and may play a role in the structure and function of the aminoacyl-tRNA binding site. This is Large ribosomal subunit protein bL19 from Bacillus cytotoxicus (strain DSM 22905 / CIP 110041 / 391-98 / NVH 391-98).